We begin with the raw amino-acid sequence, 296 residues long: 4-diphosphocytidyl-2-C-methyl-D-erythritol kinase (296 aa).

Residue K12 is part of the active site. 94–104 lines the ATP pocket; sequence PAQAGMGGGSS. D136 is an active-site residue.

It belongs to the GHMP kinase family. IspE subfamily.

The enzyme catalyses 4-CDP-2-C-methyl-D-erythritol + ATP = 4-CDP-2-C-methyl-D-erythritol 2-phosphate + ADP + H(+). The protein operates within isoprenoid biosynthesis; isopentenyl diphosphate biosynthesis via DXP pathway; isopentenyl diphosphate from 1-deoxy-D-xylulose 5-phosphate: step 3/6. In terms of biological role, catalyzes the phosphorylation of the position 2 hydroxy group of 4-diphosphocytidyl-2C-methyl-D-erythritol. The protein is 4-diphosphocytidyl-2-C-methyl-D-erythritol kinase of Variovorax paradoxus (strain S110).